An 80-amino-acid chain; its full sequence is Acyl carrier protein (80 aa).

Residues glutamate 4–glutamine 79 enclose the Carrier domain. Position 39 is an O-(pantetheine 4'-phosphoryl)serine (serine 39).

Belongs to the acyl carrier protein (ACP) family. 4'-phosphopantetheine is transferred from CoA to a specific serine of apo-ACP by AcpS. This modification is essential for activity because fatty acids are bound in thioester linkage to the sulfhydryl of the prosthetic group.

Its subcellular location is the cytoplasm. The protein operates within lipid metabolism; fatty acid biosynthesis. Its function is as follows. Carrier of the growing fatty acid chain in fatty acid biosynthesis. The sequence is that of Acyl carrier protein from Synechococcus sp. (strain CC9902).